Here is a 155-residue protein sequence, read N- to C-terminus: MSNSISVSFNDEPPGSIDPVRVENFISEVLKDLNLKNWDISLLFCDDAFIQNLNKQYRDIDSPTDVLSFEQGDEYFDEAGETRFMAGDIVISLDSLSFNAEEFNVDINEELKRLIVHGILHLNGMDHSDNSPEQEMLKFQEELLMQYKNMEIYRV.

Positions 117, 121, and 127 each coordinate Zn(2+).

It belongs to the endoribonuclease YbeY family. Zn(2+) serves as cofactor.

The protein localises to the cytoplasm. In terms of biological role, single strand-specific metallo-endoribonuclease involved in late-stage 70S ribosome quality control and in maturation of the 3' terminus of the 16S rRNA. The sequence is that of Endoribonuclease YbeY from Treponema denticola (strain ATCC 35405 / DSM 14222 / CIP 103919 / JCM 8153 / KCTC 15104).